Reading from the N-terminus, the 920-residue chain is Isoleucine--tRNA ligase (920 aa).

The 'HIGH' region signature appears at 57-67; the sequence is PYANGDIHLGH. Position 560 (Glu560) interacts with L-isoleucyl-5'-AMP. The 'KMSKS' region signature appears at 601–605; the sequence is KMSKS. An ATP-binding site is contributed by Lys604. Positions 890, 893, 910, and 913 each coordinate Zn(2+).

It belongs to the class-I aminoacyl-tRNA synthetase family. IleS type 1 subfamily. Monomer. It depends on Zn(2+) as a cofactor.

The protein resides in the cytoplasm. The catalysed reaction is tRNA(Ile) + L-isoleucine + ATP = L-isoleucyl-tRNA(Ile) + AMP + diphosphate. In terms of biological role, catalyzes the attachment of isoleucine to tRNA(Ile). As IleRS can inadvertently accommodate and process structurally similar amino acids such as valine, to avoid such errors it has two additional distinct tRNA(Ile)-dependent editing activities. One activity is designated as 'pretransfer' editing and involves the hydrolysis of activated Val-AMP. The other activity is designated 'posttransfer' editing and involves deacylation of mischarged Val-tRNA(Ile). This is Isoleucine--tRNA ligase from Caldicellulosiruptor bescii (strain ATCC BAA-1888 / DSM 6725 / KCTC 15123 / Z-1320) (Anaerocellum thermophilum).